Here is a 474-residue protein sequence, read N- to C-terminus: tRNA-2-methylthio-N(6)-dimethylallyladenosine synthase (474 aa).

Residues 3 to 120 (QKLHIKTWGC…LPEMINQIRG (118 aa)) enclose the MTTase N-terminal domain. [4Fe-4S] cluster-binding residues include Cys12, Cys49, Cys83, Cys157, Cys161, and Cys164. One can recognise a Radical SAM core domain in the interval 143–375 (KAEGPTAFVS…QQRINNQAAK (233 aa)). The region spanning 378–441 (RAMLGTEQRV…TNSLRGDVIR (64 aa)) is the TRAM domain.

Belongs to the methylthiotransferase family. MiaB subfamily. In terms of assembly, monomer. It depends on [4Fe-4S] cluster as a cofactor.

It is found in the cytoplasm. The enzyme catalyses N(6)-dimethylallyladenosine(37) in tRNA + (sulfur carrier)-SH + AH2 + 2 S-adenosyl-L-methionine = 2-methylsulfanyl-N(6)-dimethylallyladenosine(37) in tRNA + (sulfur carrier)-H + 5'-deoxyadenosine + L-methionine + A + S-adenosyl-L-homocysteine + 2 H(+). Catalyzes the methylthiolation of N6-(dimethylallyl)adenosine (i(6)A), leading to the formation of 2-methylthio-N6-(dimethylallyl)adenosine (ms(2)i(6)A) at position 37 in tRNAs that read codons beginning with uridine. The sequence is that of tRNA-2-methylthio-N(6)-dimethylallyladenosine synthase from Actinobacillus succinogenes (strain ATCC 55618 / DSM 22257 / CCUG 43843 / 130Z).